We begin with the raw amino-acid sequence, 596 residues long: Nuclear receptor subfamily 2 group C member 2 (596 aa).

Ser-19 is modified (phosphoserine; by MAPK). Ser-46 carries the phosphoserine modification. Phosphoserine; by MAPK occurs at positions 55 and 68. At Ser-98 the chain carries Phosphoserine. The segment at residues 114 to 189 is a DNA-binding region (nuclear receptor); the sequence is VEYCVVCGDK…MGMKMESVQS (76 aa). 2 consecutive NR C4-type zinc fingers follow at residues 117–137 and 153–177; these read CVVCGDKASGRHYGAVSCEGC and CRSNQDCIINKHHRNRCQFCRLKKC. Residue Lys-192 forms a Glycyl lysine isopeptide (Lys-Gly) (interchain with G-Cter in SUMO2) linkage. Phosphoserine is present on Ser-219. N6-acetyllysine is present on Lys-231. The NR LBD domain maps to 341–583; that stretch reads GSIHVISRDQ…SIIPYILKME (243 aa).

This sequence belongs to the nuclear hormone receptor family. NR2 subfamily. As to quaternary structure, homodimer; can bind DNA as homodimer. Heterodimer; binds DNA as a heterodimer with NR2C1 required for chromatin remodeling and for binding to promoter regions such as globin DR1 repeats. Interacts with PCAF; the interaction preferentially occurs on the non-phosphorylated form and induces NR2C2-mediated transactivation activity and does not require the ligand-binding domain. Interacts (MAPK-mediated phosphorylated form) with NRIP1; the interaction promotes repression of NR2C2-mediated activity. Interacts with NR2C2AP; the interaction represses selective NR2C2-mediated transcriptional activity. Interacts with NLRP10. Interacts (via ligand-binding region) with transcriptional corepressor JAZF1; the interaction promotes NR2C2-mediated transcriptional repression. Phosphorylation on Ser-19 and Ser-68 is an important regulator of NR2C2-mediated transcriptional activity. Phosphorylation on these residues recruits the corepressor, NRIP1, leading to transcripional repression, whereas the non-phosphorylated form preferentially recruits the coactivator, PCAF.

The protein localises to the nucleus. Orphan nuclear receptor that can act as a repressor or activator of transcription. An important repressor of nuclear receptor signaling pathways such as retinoic acid receptor, retinoid X, vitamin D3 receptor, thyroid hormone receptor and estrogen receptor pathways. May regulate gene expression during the late phase of spermatogenesis. Together with NR2C1, forms the core of the DRED (direct repeat erythroid-definitive) complex that represses embryonic and fetal globin transcription including that of GATA1. Binds to hormone response elements (HREs) consisting of two 5'-AGGTCA-3' half site direct repeat consensus sequences. Plays a fundamental role in early embryonic development and embryonic stem cells. Required for normal spermatogenesis and cerebellum development. Appears to be important for neurodevelopmentally regulated behavior. Activates transcriptional activity of LHCG. Antagonist of PPARA-mediated transactivation. This is Nuclear receptor subfamily 2 group C member 2 (NR2C2) from Homo sapiens (Human).